Consider the following 382-residue polypeptide: Queuine tRNA-ribosyltransferase (382 aa).

D93 functions as the Proton acceptor in the catalytic mechanism. Substrate-binding positions include 93-97 (DSGGF), D147, Q191, and G218. An RNA binding region spans residues 249 to 255 (GVGKPED). The active-site Nucleophile is D268. The RNA binding; important for wobble base 34 recognition stretch occupies residues 273 to 277 (TRNAR). 4 residues coordinate Zn(2+): C306, C308, C311, and H337.

The protein belongs to the queuine tRNA-ribosyltransferase family. As to quaternary structure, homodimer. Within each dimer, one monomer is responsible for RNA recognition and catalysis, while the other monomer binds to the replacement base PreQ1. Requires Zn(2+) as cofactor.

It catalyses the reaction 7-aminomethyl-7-carbaguanine + guanosine(34) in tRNA = 7-aminomethyl-7-carbaguanosine(34) in tRNA + guanine. It functions in the pathway tRNA modification; tRNA-queuosine biosynthesis. In terms of biological role, catalyzes the base-exchange of a guanine (G) residue with the queuine precursor 7-aminomethyl-7-deazaguanine (PreQ1) at position 34 (anticodon wobble position) in tRNAs with GU(N) anticodons (tRNA-Asp, -Asn, -His and -Tyr). Catalysis occurs through a double-displacement mechanism. The nucleophile active site attacks the C1' of nucleotide 34 to detach the guanine base from the RNA, forming a covalent enzyme-RNA intermediate. The proton acceptor active site deprotonates the incoming PreQ1, allowing a nucleophilic attack on the C1' of the ribose to form the product. After dissociation, two additional enzymatic reactions on the tRNA convert PreQ1 to queuine (Q), resulting in the hypermodified nucleoside queuosine (7-(((4,5-cis-dihydroxy-2-cyclopenten-1-yl)amino)methyl)-7-deazaguanosine). This is Queuine tRNA-ribosyltransferase from Actinobacillus pleuropneumoniae serotype 3 (strain JL03).